The following is a 162-amino-acid chain: Ecotin (162 aa).

Residues 1 to 18 form the signal peptide; it reads MKMFVPAVVFAASASAWA. An intrachain disulfide couples Cys-70 to Cys-107.

This sequence belongs to the protease inhibitor I11 (ecotin) family. Homodimer.

It localises to the periplasm. In terms of biological role, general inhibitor of pancreatic serine proteases: inhibits chymotrypsin, trypsin, elastases, factor X, kallikrein as well as a variety of other proteases. The polypeptide is Ecotin (Salmonella arizonae (strain ATCC BAA-731 / CDC346-86 / RSK2980)).